The primary structure comprises 160 residues: Cytochrome b6-f complex subunit 4 (160 aa).

3 helical membrane passes run 36–56, 95–115, and 131–151; these read LLYM…SLAV, LLGV…PFIE, and TLFL…ALPI.

The protein belongs to the cytochrome b family. PetD subfamily. The 4 large subunits of the cytochrome b6-f complex are cytochrome b6, subunit IV (17 kDa polypeptide, petD), cytochrome f and the Rieske protein, while the 4 small subunits are petG, petL, petM and petN. The complex functions as a dimer.

It is found in the plastid. It localises to the chloroplast thylakoid membrane. Its function is as follows. Component of the cytochrome b6-f complex, which mediates electron transfer between photosystem II (PSII) and photosystem I (PSI), cyclic electron flow around PSI, and state transitions. This chain is Cytochrome b6-f complex subunit 4, found in Oltmannsiellopsis viridis (Marine flagellate).